The sequence spans 346 residues: Transcription termination factor 4, mitochondrial (346 aa).

The transit peptide at 1–42 (MASLGRQVPEWHRLLALSWACLVRQTPHLREQKQMSPSLSCK) directs the protein to the mitochondrion. MTERF repeat units follow at residues 142 to 172 (FNALKKNPQLLKLSSMQMKRRSSYLRKLGLG), 177 to 204 (KRVLSVCPEVFTMHQRDIDRVVKVLREK), 209 to 239 (AQHITDVLHRCPTVLQEDPNELEYKFQYAYF), 245 to 270 (HLDIVRTNFLQYSITKIKQRHIYLER), and 290 to 318 (LRNILRVSEAEFLARTACSSVEEFQVFKK). Residues 310–327 (VEEFQVFKKLLDQEEEEE) form a dimerization with NSUN4 region. The interval 321–346 (DQEEEEESESHASEEEEEEEEEEELL) is disordered. Over residues 322 to 346 (QEEEEESESHASEEEEEEEEEEELL) the composition is skewed to acidic residues.

Belongs to the mTERF family. Heterodimer with NSUN4; this interaction may be required for NSUN4 recruitment to the mitochondrial large ribosomal subunit. In terms of tissue distribution, widely expressed, with highest levels in liver, followed by testis, kidney and brain.

It is found in the mitochondrion. Functionally, regulator of mitochondrial ribosome biogenesis and translation. Binds to mitochondrial ribosomal RNAs 16S, 12S and 7S. Targets NSUN4 RNA methyltransferase to the mitochondrial large ribosomal subunit. The polypeptide is Transcription termination factor 4, mitochondrial (Mterf4) (Mus musculus (Mouse)).